The sequence spans 95 residues: Co-chaperonin GroES (95 aa).

The protein belongs to the GroES chaperonin family. Heptamer of 7 subunits arranged in a ring. Interacts with the chaperonin GroEL.

The protein resides in the cytoplasm. Functionally, together with the chaperonin GroEL, plays an essential role in assisting protein folding. The GroEL-GroES system forms a nano-cage that allows encapsulation of the non-native substrate proteins and provides a physical environment optimized to promote and accelerate protein folding. GroES binds to the apical surface of the GroEL ring, thereby capping the opening of the GroEL channel. This is Co-chaperonin GroES from Chlorobium phaeovibrioides (strain DSM 265 / 1930) (Prosthecochloris vibrioformis (strain DSM 265)).